A 365-amino-acid polypeptide reads, in one-letter code: DNA replication and repair protein RecF (365 aa).

30–37 provides a ligand contact to ATP; sequence GNNGMGKT.

The protein belongs to the RecF family.

It localises to the cytoplasm. In terms of biological role, the RecF protein is involved in DNA metabolism; it is required for DNA replication and normal SOS inducibility. RecF binds preferentially to single-stranded, linear DNA. It also seems to bind ATP. The polypeptide is DNA replication and repair protein RecF (Parabacteroides distasonis (strain ATCC 8503 / DSM 20701 / CIP 104284 / JCM 5825 / NCTC 11152)).